Here is a 700-residue protein sequence, read N- to C-terminus: Hedgehog-interacting protein (700 aa).

The signal sequence occupies residues 1–17; sequence MLKMLSFKLLLLAVALG. Residue Asn99 is glycosylated (N-linked (GlcNAc...) asparagine). 11 cysteine pairs are disulfide-bonded: Cys216–Cys536, Cys218–Cys543, Cys402–Cys624, Cys435–Cys452, Cys500–Cys594, Cys608–Cys617, Cys612–Cys623, Cys625–Cys634, Cys639–Cys649, Cys643–Cys655, and Cys657–Cys666. An interaction with SHH zinc binding site region spans residues 376 to 388; the sequence is LDDMEEMDGLSDF. Asp383 contacts Zn(2+). Residues Asn416, Asn447, and Asn459 are each glycosylated (N-linked (GlcNAc...) asparagine). EGF-like domains lie at 607–634 and 635–667; these read ECSR…GDFC and RTAK…PQCE.

It belongs to the HHIP family. Interacts with all three hedgehog family members, SHH, IHH and DHH. Widely expressed in fetal and adult tissues. Highest expression in adult heart, liver and pancreas, and in fetal kidney.

The protein resides in the cell membrane. It localises to the secreted. The protein localises to the cytoplasm. Functionally, modulates hedgehog signaling in several cell types including brain and lung through direct interaction with members of the hedgehog family. This is Hedgehog-interacting protein (HHIP) from Homo sapiens (Human).